The chain runs to 158 residues: Cytochrome c-type biogenesis protein CcmE (158 aa).

At 1–7 (MKPRHRR) the chain is on the cytoplasmic side. A helical; Signal-anchor for type II membrane protein transmembrane segment spans residues 8–28 (LTLIALVLGGLGLSAGLALTA). The Periplasmic segment spans residues 29-158 (FQDNLVFFFT…DGHPETTTAY (130 aa)). Residues His-123 and Tyr-127 each coordinate heme. A disordered region spans residues 138–158 (RIGQGNGTPGPDGHPETTTAY).

The protein belongs to the CcmE/CycJ family.

It localises to the cell inner membrane. In terms of biological role, heme chaperone required for the biogenesis of c-type cytochromes. Transiently binds heme delivered by CcmC and transfers the heme to apo-cytochromes in a process facilitated by CcmF and CcmH. The chain is Cytochrome c-type biogenesis protein CcmE from Alkalilimnicola ehrlichii (strain ATCC BAA-1101 / DSM 17681 / MLHE-1).